Here is a 187-residue protein sequence, read N- to C-terminus: Ribosome-recycling factor (187 aa).

The protein belongs to the RRF family.

Its subcellular location is the cytoplasm. Responsible for the release of ribosomes from messenger RNA at the termination of protein biosynthesis. May increase the efficiency of translation by recycling ribosomes from one round of translation to another. This Rhodopseudomonas palustris (strain BisB18) protein is Ribosome-recycling factor.